Reading from the N-terminus, the 223-residue chain is Deoxyribose-phosphate aldolase (223 aa).

The Proton donor/acceptor role is filled by Asp-89. The active-site Schiff-base intermediate with acetaldehyde is Lys-154. Lys-183 serves as the catalytic Proton donor/acceptor.

The protein belongs to the DeoC/FbaB aldolase family. DeoC type 1 subfamily.

Its subcellular location is the cytoplasm. It carries out the reaction 2-deoxy-D-ribose 5-phosphate = D-glyceraldehyde 3-phosphate + acetaldehyde. It participates in carbohydrate degradation; 2-deoxy-D-ribose 1-phosphate degradation; D-glyceraldehyde 3-phosphate and acetaldehyde from 2-deoxy-alpha-D-ribose 1-phosphate: step 2/2. Functionally, catalyzes a reversible aldol reaction between acetaldehyde and D-glyceraldehyde 3-phosphate to generate 2-deoxy-D-ribose 5-phosphate. This Thermoanaerobacter pseudethanolicus (strain ATCC 33223 / 39E) (Clostridium thermohydrosulfuricum) protein is Deoxyribose-phosphate aldolase.